The primary structure comprises 157 residues: MDPEISEQDEEKKKYTSVCVGREEDIRKSERMTAVVHDREVVIFYHKGEYHAMDIRCYHSGGPLHLGEIEDFNGQSCIVCPWHKYKITLATGEGLYQSINPKDPSAKPKWCSKGVKQRIHTVKVDNGNIYVTLSKEPFKCDSDYYATGEFKVIQSSS.

Position 1 is an N-acetylmethionine (Met-1). Position 6 is a phosphoserine (Ser-6). 2 Rieske domains span residues 16–127 (TSVC…VDNG) and 17–131 (SVCV…NIYV). [2Fe-2S] cluster-binding residues include Cys-57, His-59, Cys-80, and His-83.

It depends on [2Fe-2S] cluster as a cofactor.

This Mus musculus (Mouse) protein is Rieske domain-containing protein (Rfesd).